The sequence spans 612 residues: tRNA uridine 5-carboxymethylaminomethyl modification enzyme MnmG (612 aa).

9–14 provides a ligand contact to FAD; that stretch reads GAGHAG. NAD(+) is bound at residue 270-284; that stretch reads GPLYCPSIEDKVFKF.

The protein belongs to the MnmG family. In terms of assembly, homodimer. Heterotetramer of two MnmE and two MnmG subunits. Requires FAD as cofactor.

The protein localises to the cytoplasm. In terms of biological role, NAD-binding protein involved in the addition of a carboxymethylaminomethyl (cmnm) group at the wobble position (U34) of certain tRNAs, forming tRNA-cmnm(5)s(2)U34. This is tRNA uridine 5-carboxymethylaminomethyl modification enzyme MnmG from Mycoplasma genitalium (strain ATCC 33530 / DSM 19775 / NCTC 10195 / G37) (Mycoplasmoides genitalium).